Here is a 209-residue protein sequence, read N- to C-terminus: Ribosomal RNA large subunit methyltransferase E (209 aa).

S-adenosyl-L-methionine-binding residues include glycine 63, tryptophan 65, aspartate 83, aspartate 99, and aspartate 124. The active-site Proton acceptor is the lysine 164.

This sequence belongs to the class I-like SAM-binding methyltransferase superfamily. RNA methyltransferase RlmE family.

Its subcellular location is the cytoplasm. It catalyses the reaction uridine(2552) in 23S rRNA + S-adenosyl-L-methionine = 2'-O-methyluridine(2552) in 23S rRNA + S-adenosyl-L-homocysteine + H(+). Its function is as follows. Specifically methylates the uridine in position 2552 of 23S rRNA at the 2'-O position of the ribose in the fully assembled 50S ribosomal subunit. In Yersinia enterocolitica serotype O:8 / biotype 1B (strain NCTC 13174 / 8081), this protein is Ribosomal RNA large subunit methyltransferase E.